The sequence spans 383 residues: Gap junction alpha-1 protein (383 aa).

Topologically, residues 2 to 23 (GDWSALGKLLDKVQAYSTAGGK) are cytoplasmic. The residue at position 5 (Ser-5) is a Phosphoserine. Residues 24 to 44 (VWLSVLFIFRILLLGTAVESA) form a helical membrane-spanning segment. Residues 45 to 76 (WGDEQSAFRCNTQQPGCENVCYDKSFPISHVR) are Extracellular-facing. 2 cysteine pairs are disulfide-bonded: Cys-54–Cys-193 and Cys-188–Cys-199. A helical membrane pass occupies residues 77-97 (FWVLQIIFVSVPTLLYLAHVF). Over 98–156 (YVMRKEEKLNKKEEELKVVAQTDGANVDMHLKQIEIKKFKYGIEEHGKVKMRGGLLRTY) the chain is Cytoplasmic. Lys-145 participates in a covalent cross-link: Glycyl lysine isopeptide (Lys-Gly) (interchain with G-Cter in SUMO). Residues 157-177 (IISILFKSVFEVAFLLIQWYI) form a helical membrane-spanning segment. At 178-208 (YGFSLSAVYTCKRDPCPHQVDCFLSRPTEKT) the chain is on the extracellular side. A helical membrane pass occupies residues 209–229 (IFIIFMLVVSLVSLALNIIEL). Residues 230–383 (FYVFFKGVKD…SRPRPDDLEI (154 aa)) lie on the Cytoplasmic side of the membrane. Residue Lys-238 forms a Glycyl lysine isopeptide (Lys-Gly) (interchain with G-Cter in SUMO) linkage. The tract at residues 245–383 (SDPYHTTTGP…SRPRPDDLEI (139 aa)) is interaction with NOV. A Phosphotyrosine modification is found at Tyr-248. A phosphoserine mark is found at Ser-256, Ser-258, and Ser-263. Residues 265–383 (KYAYFNGCSS…SRPRPDDLEI (119 aa)) form an interaction with UBQLN4 region. Cys-272 is modified (S-nitrosocysteine). Thr-276 carries the post-translational modification Phosphothreonine. Phosphoserine is present on residues Ser-307 and Ser-315. Residues 318–333 (QNRMGQAGSTISNSHA) are compositionally biased toward polar residues. Residues 318-383 (QNRMGQAGST…SRPRPDDLEI (66 aa)) are disordered. At Ser-326 the chain carries Phosphoserine; by CK1. Thr-327 is modified (phosphothreonine). A phosphoserine; by CK1 mark is found at Ser-329 and Ser-331. Positions 339–352 (PDDHQNSKKLDAGH) are enriched in basic and acidic residues. Phosphoserine occurs at positions 345 and 366. Positions 363 to 375 (RPSSRASSRASSR) are enriched in low complexity. Ser-369 is modified (phosphoserine; by PKC/PRKCG and PKC/PRKCD). 2 positions are modified to phosphoserine: Ser-370 and Ser-374.

It belongs to the connexin family. Alpha-type (group II) subfamily. As to quaternary structure, a connexon is composed of a hexamer of connexins. Interacts with SGSM3. Interacts with RIC1/CIP150. Interacts with CNST and CSNK1D. Interacts (via C-terminus) with TJP1. Interacts (via C-terminus) with SRC (via SH3 domain). Interacts (not ubiquitinated) with UBQLN4 (via UBA domain). Interacts with NOV. Interacts with TMEM65. Interacts with ANK3/ANKG and PKP2. Post-translationally, phosphorylation at Ser-326, Ser-329 and Ser-331 by CK1 modulates gap junction assembly. Phosphorylated at Ser-369 by PRKCG; phosphorylation induces disassembly of gap junction plaques and inhibition of gap junction activity. Phosphorylation at Ser-369 by PRKCD triggers its internalization into small vesicles leading to proteasome-mediated degradation. In terms of processing, sumoylated with SUMO1, SUMO2 and SUMO3, which may regulate the level of functional Cx43 gap junctions at the plasma membrane. May be desumoylated by SENP1 or SENP2. Acetylated in the developing cortex; leading to delocalization from the cell membrane.

It localises to the cell membrane. The protein localises to the cell junction. It is found in the gap junction. The protein resides in the endoplasmic reticulum. In terms of biological role, gap junction protein that acts as a regulator of bladder capacity. A gap junction consists of a cluster of closely packed pairs of transmembrane channels, the connexons, through which materials of low MW diffuse from one cell to a neighboring cell. May play a critical role in the physiology of hearing by participating in the recycling of potassium to the cochlear endolymph. Negative regulator of bladder functional capacity: acts by enhancing intercellular electrical and chemical transmission, thus sensitizing bladder muscles to cholinergic neural stimuli and causing them to contract. May play a role in cell growth inhibition through the regulation of NOV expression and localization. Plays an essential role in gap junction communication in the ventricles. In Bos taurus (Bovine), this protein is Gap junction alpha-1 protein (GJA1).